Reading from the N-terminus, the 20-residue chain is Brevinin-1LT (20 aa).

A disulfide bridge links C14 with C20.

Expressed by the skin glands.

It localises to the secreted. Its function is as follows. Antimicrobial peptide. The sequence is that of Brevinin-1LT from Rana latastei (Italian agile frog).